Here is a 487-residue protein sequence, read N- to C-terminus: Glutamyl-tRNA(Gln) amidotransferase subunit A (487 aa).

Residues K77 and S152 each act as charge relay system in the active site. S176 functions as the Acyl-ester intermediate in the catalytic mechanism.

It belongs to the amidase family. GatA subfamily. Heterotrimer of A, B and C subunits.

The enzyme catalyses L-glutamyl-tRNA(Gln) + L-glutamine + ATP + H2O = L-glutaminyl-tRNA(Gln) + L-glutamate + ADP + phosphate + H(+). Allows the formation of correctly charged Gln-tRNA(Gln) through the transamidation of misacylated Glu-tRNA(Gln) in organisms which lack glutaminyl-tRNA synthetase. The reaction takes place in the presence of glutamine and ATP through an activated gamma-phospho-Glu-tRNA(Gln). In Ligilactobacillus salivarius (strain UCC118) (Lactobacillus salivarius), this protein is Glutamyl-tRNA(Gln) amidotransferase subunit A.